A 122-amino-acid chain; its full sequence is Large ribosomal subunit protein uL14 (122 aa).

It belongs to the universal ribosomal protein uL14 family. As to quaternary structure, part of the 50S ribosomal subunit. Forms a cluster with proteins L3 and L19. In the 70S ribosome, L14 and L19 interact and together make contacts with the 16S rRNA in bridges B5 and B8.

Its function is as follows. Binds to 23S rRNA. Forms part of two intersubunit bridges in the 70S ribosome. This chain is Large ribosomal subunit protein uL14, found in Moorella thermoacetica (strain ATCC 39073 / JCM 9320).